A 253-amino-acid chain; its full sequence is Probable transcriptional regulatory protein Mmar10_2433 (253 aa).

Belongs to the TACO1 family.

Its subcellular location is the cytoplasm. The sequence is that of Probable transcriptional regulatory protein Mmar10_2433 from Maricaulis maris (strain MCS10) (Caulobacter maris).